Consider the following 308-residue polypeptide: tRNA pseudouridine synthase B (308 aa).

Asp48 (nucleophile) is an active-site residue.

Belongs to the pseudouridine synthase TruB family. Type 1 subfamily.

It catalyses the reaction uridine(55) in tRNA = pseudouridine(55) in tRNA. In terms of biological role, responsible for synthesis of pseudouridine from uracil-55 in the psi GC loop of transfer RNAs. In Histophilus somni (strain 129Pt) (Haemophilus somnus), this protein is tRNA pseudouridine synthase B.